The chain runs to 504 residues: Maturase K (504 aa).

The protein belongs to the intron maturase 2 family. MatK subfamily.

Its subcellular location is the plastid. The protein resides in the chloroplast. Its function is as follows. Usually encoded in the trnK tRNA gene intron. Probably assists in splicing its own and other chloroplast group II introns. The chain is Maturase K from Cynophalla hastata (Broadleaf caper).